The primary structure comprises 191 residues: Gamma-glutamylaminecyclotransferase B (191 aa).

7–10 (YGTL) contributes to the substrate binding site. Glu-82 serves as the catalytic Proton acceptor. Residues 155 to 178 (SADFSQNSEQEIKKNNSLQILTST) are compositionally biased toward polar residues. Positions 155–191 (SADFSQNSEQEIKKNNSLQILTSTGDDHDVNFRGPLQ) are disordered.

Belongs to the gamma-glutamylcyclotransferase family.

The enzyme catalyses epsilon-(gamma-L-glutamyl)-L-lysine = 5-oxo-L-proline + L-lysine. In terms of biological role, may contribute to degradation of proteins cross-linked by transglutaminases by degrading the cross-link between a lysine and a glutamic acid residue. Catalyzes the formation of 5-oxo-L-proline from L-gamma-glutamyl-L-epsilon-lysine. The protein is Gamma-glutamylaminecyclotransferase B (ggact.2) of Danio rerio (Zebrafish).